The primary structure comprises 134 residues: uncharacterized protein (134 aa).

This is an uncharacterized protein from Archaeoglobus fulgidus (strain ATCC 49558 / DSM 4304 / JCM 9628 / NBRC 100126 / VC-16).